The primary structure comprises 250 residues: Indole-3-glycerol phosphate synthase (250 aa).

Belongs to the TrpC family.

The catalysed reaction is 1-(2-carboxyphenylamino)-1-deoxy-D-ribulose 5-phosphate + H(+) = (1S,2R)-1-C-(indol-3-yl)glycerol 3-phosphate + CO2 + H2O. It participates in amino-acid biosynthesis; L-tryptophan biosynthesis; L-tryptophan from chorismate: step 4/5. The chain is Indole-3-glycerol phosphate synthase from Bacillus pumilus (strain SAFR-032).